We begin with the raw amino-acid sequence, 85 residues long: Large ribosomal subunit protein bL27 (85 aa).

The protein belongs to the bacterial ribosomal protein bL27 family.

In Azobacteroides pseudotrichonymphae genomovar. CFP2, this protein is Large ribosomal subunit protein bL27.